Here is a 245-residue protein sequence, read N- to C-terminus: Carboxymethylenebutenolidase homolog (245 aa).

An N-acetylalanine modification is found at A2. K36 carries the post-translational modification N6-acetyllysine. Active-site residues include C132, D179, and H212. A Phosphoserine modification is found at S223.

The protein belongs to the dienelactone hydrolase family. As to expression, widely expressed, with highest levels in liver, followed by kidney, small intestine and colon. Present in liver and intestine (at protein level).

It is found in the cytoplasm. Its subcellular location is the cytosol. Strongly inhibited by p-chloromercuribenzoate (PCMB). Partially inhibited by bis-p-nitrophenylphosphate (BNPP). Not inhibited by DFP, PMSF, eserine or EDTA. In terms of biological role, cysteine hydrolase. Can convert the prodrug olmesartan medoxomil into its pharmacologically active metabolite olmerstatan, an angiotensin receptor blocker, in liver and intestine. May also activate beta-lactam antibiotics faropenem medoxomil and lenampicillin. The protein is Carboxymethylenebutenolidase homolog (CMBL) of Homo sapiens (Human).